The sequence spans 388 residues: UDP-N-acetylglucosamine--N-acetylmuramyl-(pentapeptide) pyrophosphoryl-undecaprenol N-acetylglucosamine transferase (388 aa).

Residues 42–44 (TGG), Asn159, Arg195, Ser223, Ile277, and Gln322 each bind UDP-N-acetyl-alpha-D-glucosamine.

This sequence belongs to the glycosyltransferase 28 family. MurG subfamily.

The protein localises to the cell inner membrane. The enzyme catalyses di-trans,octa-cis-undecaprenyl diphospho-N-acetyl-alpha-D-muramoyl-L-alanyl-D-glutamyl-meso-2,6-diaminopimeloyl-D-alanyl-D-alanine + UDP-N-acetyl-alpha-D-glucosamine = di-trans,octa-cis-undecaprenyl diphospho-[N-acetyl-alpha-D-glucosaminyl-(1-&gt;4)]-N-acetyl-alpha-D-muramoyl-L-alanyl-D-glutamyl-meso-2,6-diaminopimeloyl-D-alanyl-D-alanine + UDP + H(+). The protein operates within cell wall biogenesis; peptidoglycan biosynthesis. Functionally, cell wall formation. Catalyzes the transfer of a GlcNAc subunit on undecaprenyl-pyrophosphoryl-MurNAc-pentapeptide (lipid intermediate I) to form undecaprenyl-pyrophosphoryl-MurNAc-(pentapeptide)GlcNAc (lipid intermediate II). This chain is UDP-N-acetylglucosamine--N-acetylmuramyl-(pentapeptide) pyrophosphoryl-undecaprenol N-acetylglucosamine transferase, found in Albidiferax ferrireducens (strain ATCC BAA-621 / DSM 15236 / T118) (Rhodoferax ferrireducens).